Here is a 153-residue protein sequence, read N- to C-terminus: SsrA-binding protein (153 aa).

It belongs to the SmpB family.

It is found in the cytoplasm. Required for rescue of stalled ribosomes mediated by trans-translation. Binds to transfer-messenger RNA (tmRNA), required for stable association of tmRNA with ribosomes. tmRNA and SmpB together mimic tRNA shape, replacing the anticodon stem-loop with SmpB. tmRNA is encoded by the ssrA gene; the 2 termini fold to resemble tRNA(Ala) and it encodes a 'tag peptide', a short internal open reading frame. During trans-translation Ala-aminoacylated tmRNA acts like a tRNA, entering the A-site of stalled ribosomes, displacing the stalled mRNA. The ribosome then switches to translate the ORF on the tmRNA; the nascent peptide is terminated with the 'tag peptide' encoded by the tmRNA and targeted for degradation. The ribosome is freed to recommence translation, which seems to be the essential function of trans-translation. This Sulfurovum sp. (strain NBC37-1) protein is SsrA-binding protein.